Here is a 1138-residue protein sequence, read N- to C-terminus: BMP-2-inducible protein kinase (1138 aa).

Serine 13 bears the Phosphoserine mark. The 266-residue stretch at 48 to 313 folds into the Protein kinase domain; sequence VTLEESLAEG…DIFQVSYFAF (266 aa). ATP contacts are provided by residues 54–62 and lysine 76; that span reads LAEGGFSTV. Aspartate 177 functions as the Proton acceptor in the catalytic mechanism. Disordered regions lie at residues 355-435, 638-831, and 906-1018; these read TDTI…RVLQ, NRLG…PADA, and PRSV…EFLT. Over residues 358–390 the composition is skewed to polar residues; the sequence is IGPTETSIAPRQRPKANSTAATSSVLTIQSSAT. Residues 417–435 show a composition bias toward low complexity; that stretch reads VLMVQGPPQQPPQQHRVLQ. Serine 676 is subject to Phosphoserine. Polar residues predominate over residues 684 to 701; it reads HSPNQKSITANLTKNGGS. A compositionally biased stretch (basic and acidic residues) spans 706 to 715; the sequence is KDQRAGKKTS. A phosphoserine mark is found at serine 733, serine 806, and serine 807. Residues 787–813 are compositionally biased toward basic and acidic residues; sequence DKHSSDSECEQAKTKRGDTSSLRRDKP. Threonine 819 bears the Phosphothreonine mark. Serine 908 is modified (phosphoserine). Residues 915–926 show a composition bias toward polar residues; that stretch reads TPFQPFSVSASK. Over residues 951–965 the composition is skewed to basic residues; that stretch reads VKQRSLQKLSSRQRR. 7 positions are modified to phosphoserine: serine 1010, serine 1012, serine 1013, serine 1020, serine 1022, serine 1087, and serine 1091. The disordered stretch occupies residues 1117-1138; that stretch reads TPQQSQPVELDPFGAAPFPSKQ.

The protein belongs to the protein kinase superfamily. Ser/Thr protein kinase family. In terms of processing, autophosphorylated. Expressed in osteocytes and osteoblasts.

It localises to the nucleus. The enzyme catalyses L-seryl-[protein] + ATP = O-phospho-L-seryl-[protein] + ADP + H(+). It carries out the reaction L-threonyl-[protein] + ATP = O-phospho-L-threonyl-[protein] + ADP + H(+). Functionally, may be involved in osteoblast differentiation. This Mus musculus (Mouse) protein is BMP-2-inducible protein kinase (Bmp2k).